The sequence spans 301 residues: Bifunctional protein FolD (301 aa).

NADP(+) contacts are provided by residues 169 to 171 (GRS), S194, and I235.

Belongs to the tetrahydrofolate dehydrogenase/cyclohydrolase family. In terms of assembly, homodimer.

The catalysed reaction is (6R)-5,10-methylene-5,6,7,8-tetrahydrofolate + NADP(+) = (6R)-5,10-methenyltetrahydrofolate + NADPH. The enzyme catalyses (6R)-5,10-methenyltetrahydrofolate + H2O = (6R)-10-formyltetrahydrofolate + H(+). It participates in one-carbon metabolism; tetrahydrofolate interconversion. Its function is as follows. Catalyzes the oxidation of 5,10-methylenetetrahydrofolate to 5,10-methenyltetrahydrofolate and then the hydrolysis of 5,10-methenyltetrahydrofolate to 10-formyltetrahydrofolate. The polypeptide is Bifunctional protein FolD (Gloeothece citriformis (strain PCC 7424) (Cyanothece sp. (strain PCC 7424))).